Consider the following 255-residue polypeptide: Malonyl-[acyl-carrier protein] O-methyltransferase (255 aa).

The protein belongs to the methyltransferase superfamily.

The catalysed reaction is malonyl-[ACP] + S-adenosyl-L-methionine = malonyl-[ACP] methyl ester + S-adenosyl-L-homocysteine. The protein operates within cofactor biosynthesis; biotin biosynthesis. Functionally, converts the free carboxyl group of a malonyl-thioester to its methyl ester by transfer of a methyl group from S-adenosyl-L-methionine (SAM). It allows to synthesize pimeloyl-ACP via the fatty acid synthetic pathway. The chain is Malonyl-[acyl-carrier protein] O-methyltransferase from Acinetobacter baylyi (strain ATCC 33305 / BD413 / ADP1).